The chain runs to 512 residues: Sucrose transport protein SUC5 (512 aa).

A disordered region spans residues 1–27; the sequence is MGALEAERAANNATALETQSSPEDLGQ. The Cytoplasmic portion of the chain corresponds to 1–33; it reads MGALEAERAANNATALETQSSPEDLGQPSPLRK. Over residues 11-22 the composition is skewed to polar residues; sequence NNATALETQSSP. Position 20 is a phosphoserine (Ser-20). The helical transmembrane segment at 34 to 54 threads the bilayer; that stretch reads IISVASIAAGVQFGWALQLSL. Topologically, residues 55–67 are extracellular; sequence LTPYIQLLGIPHK. A helical membrane pass occupies residues 68-88; it reads WSSYMWLCGPISGMIVQPIVG. The Cytoplasmic portion of the chain corresponds to 89–102; sequence YHSDRCESRFGRRR. The helical transmembrane segment at 103 to 123 threads the bilayer; sequence PFIAAGVALVAVSVFLIGFAA. Over 124–140 the chain is Extracellular; that stretch reads DMGHSFGDKLENKVRTR. A helical membrane pass occupies residues 141 to 161; that stretch reads AIIIFLTGFWFLDVANNTLQG. Residues 162 to 179 lie on the Cytoplasmic side of the membrane; sequence PCRAFLADLAAGDAKKTR. A helical membrane pass occupies residues 180–200; the sequence is VANACFSFFMAVGNVLGYAAG. At 201–225 the chain is on the extracellular side; sequence SYTNLHKMFPFTMTKACDIYCANLK. A helical membrane pass occupies residues 226 to 246; the sequence is TCFFLSITLLLIVTFSSLWYV. The Cytoplasmic portion of the chain corresponds to 247–281; it reads KDKQWSPPQGDKEEKTSSLFFFGEIFGAVRHMKRP. Residues 282–302 form a helical membrane-spanning segment; the sequence is MVMLLIVTVINWIAWFPFILY. Topologically, residues 303–333 are extracellular; it reads DTDWMGREVYGGNSDGDERSKKLYDQGVQAG. Residues 334-354 form a helical membrane-spanning segment; the sequence is ALGLMFNSILLGFVSLGVESI. At 355-363 the chain is on the cytoplasmic side; that stretch reads GRKMGGAKR. Residues 364–384 traverse the membrane as a helical segment; the sequence is LWGCVNFILAIGLAMTVLVTK. Topologically, residues 385-406 are extracellular; sequence SAEHHREIAGPLAGPSSGIKAG. Residues 407-427 traverse the membrane as a helical segment; that stretch reads VFSLFTVLGIPLAITYSIPFA. At 428-440 the chain is on the cytoplasmic side; it reads LASIFSTNSGAGQ. A helical membrane pass occupies residues 441 to 461; it reads GLSLGVLNIAICIPQMIVSFS. The Extracellular segment spans residues 462 to 473; the sequence is SGPLDAQFGGGN. A helical membrane pass occupies residues 474-494; that stretch reads LPSFVVGAIAAAVSGVLALTV. Residues 495–512 are Cytoplasmic-facing; that stretch reads LPSPPPDAPAMSGAMGFH.

Belongs to the glycoside-pentoside-hexuronide (GPH) cation symporter transporter (TC 2.A.2.4) family. As to expression, widely expressed. Expressed in the endosperm and on the epidermis of the outer surface of the cotyledons of torpedo-stage or older embryos.

The protein localises to the cell membrane. It catalyses the reaction sucrose(out) + H(+)(out) = sucrose(in) + H(+)(in). Its pathway is glycan biosynthesis; sucrose metabolism. Its activity is regulated as follows. Inhibited by protonophores (e.g. carbonyl cyanide m-chlorophenyl-hydrazone (CCCP)) and SH group inhibitors (e.g. p-chloromercuribenzene sulphonic acid (PCMBS)). In terms of biological role, responsible in a heterologous system for the transport of sucrose into the cell, with the concomitant uptake of protons (symport system). Can also transport biotin, and probably maltose at a lesser rate. In planta, the role of SUC5 for the transport of sucrose seems to be negligible. Plays a role in the nutrition of the filial tissues during early seed development and is probably involved in the import of biotin into the endosperm and the embryo epidermis. This is Sucrose transport protein SUC5 from Arabidopsis thaliana (Mouse-ear cress).